We begin with the raw amino-acid sequence, 299 residues long: MSEPIDLSQISPALKAEILAEALPYIRRYHGKTVVIKYGGNAMTEERLKQGFARDVILLKLVGINPVIVHGGGPQIDQALKKIGKQGTFIQGMRVTDEETMEVVEWVLGGEVQQDIVTLINHFGGHAVGLTGKDGGLIHARKLMMPDRDNPGEYVDIGQVGEVEAINPAVVKALQDDAFIPVISPIGFGEDGLSYNINADLVAGKLATVLNAEKLVMMTNIPGVMDKEGNLLTDLSAREIDALFEDGTISGGMLPKISSALDAAKSGVKSVHIVDGRIEHSVLLEILTEQPFGTMIRSH.

Residues glycine 72–glycine 73, arginine 94, and asparagine 196 each bind substrate.

This sequence belongs to the acetylglutamate kinase family. ArgB subfamily.

The protein localises to the cytoplasm. The catalysed reaction is N-acetyl-L-glutamate + ATP = N-acetyl-L-glutamyl 5-phosphate + ADP. The protein operates within amino-acid biosynthesis; L-arginine biosynthesis; N(2)-acetyl-L-ornithine from L-glutamate: step 2/4. Its function is as follows. Catalyzes the ATP-dependent phosphorylation of N-acetyl-L-glutamate. In Burkholderia mallei (strain NCTC 10247), this protein is Acetylglutamate kinase.